We begin with the raw amino-acid sequence, 165 residues long: Pyruvoyl-dependent arginine decarboxylase (165 aa).

Ser-53 carries the pyruvic acid (Ser) modification.

It belongs to the PdaD family. As to quaternary structure, trimer of an alpha-beta dimer. It depends on pyruvate as a cofactor.

It catalyses the reaction L-arginine + H(+) = agmatine + CO2. In Methanocaldococcus jannaschii (strain ATCC 43067 / DSM 2661 / JAL-1 / JCM 10045 / NBRC 100440) (Methanococcus jannaschii), this protein is Pyruvoyl-dependent arginine decarboxylase (pdaD).